Reading from the N-terminus, the 162-residue chain is Mediator of RNA polymerase II transcription subunit 31 (162 aa).

Residues 131 to 162 are disordered; it reads VQGGQNVEAGDTGHNEGDQGTQQDKENIALKT. Residues 141 to 162 show a composition bias toward basic and acidic residues; sequence DTGHNEGDQGTQQDKENIALKT.

The protein belongs to the Mediator complex subunit 31 family. As to quaternary structure, component of the Mediator complex.

The protein resides in the nucleus. Its function is as follows. Component of the Mediator complex, a coactivator involved in the regulated transcription of nearly all RNA polymerase II-dependent genes. Mediator functions as a bridge to convey information from gene-specific regulatory proteins to the basal RNA polymerase II transcription machinery. Mediator is recruited to promoters by direct interactions with regulatory proteins and serves as a scaffold for the assembly of a functional preinitiation complex with RNA polymerase II and the general transcription factors. The polypeptide is Mediator of RNA polymerase II transcription subunit 31 (soh1) (Aspergillus fumigatus (strain ATCC MYA-4609 / CBS 101355 / FGSC A1100 / Af293) (Neosartorya fumigata)).